Consider the following 491-residue polypeptide: Chondroitin proteoglycan 2 (491 aa).

A signal peptide spans 1-18; the sequence is MKTIVALGLLALATAASG. Positions 21-78 constitute a Chitin-binding type-2 1 domain; that stretch reads LQDCTNALDGLYAIGNCESQFLTCSGGIARIMDCPADLIYNEPLLICDWRHNVVGCEG. An intrachain disulfide couples Cys-54 to Cys-67. The disordered stretch occupies residues 80–126; that stretch reads GEASGEQSGEGSGEASGEGSGEASGEGSGEASGEGSGSGEGSGEENN. Over residues 87–120 the composition is skewed to gly residues; sequence SGEGSGEASGEGSGEASGEGSGEASGEGSGSGEG. Positions 125-182 constitute a Chitin-binding type-2 2 domain; that stretch reads NNVCEGLEDGAYSSGGCTTYYFFCTDNTARFLSCPTPLFYDVATQKCAWKALVEECNG. Cysteines 158 and 171 form a disulfide. A disordered region spans residues 187 to 217; it reads DGSGETSGEGSGEASGENSGENSGEGSGEFE. Ser-197 and Ser-201 each carry an O-linked (Xyl...) (chondroitin sulfate) serine glycan. Residues 200 to 210 are compositionally biased toward low complexity; that stretch reads ASGENSGENSG. 4 Chitin-binding type-2 domains span residues 217–274, 279–334, 367–423, and 436–491; these read EPTC…ECHG, APVC…ECQE, ENEC…KCLI, and PFDC…LQCH. Cystine bridges form between Cys-250–Cys-263 and Cys-310–Cys-323. Positions 336–367 are disordered; the sequence is SGEESSGEASGEQSGEGSGEASGEASGEASGE. A compositionally biased stretch (low complexity) spans 356–367; the sequence is ASGEASGEASGE. Residues Cys-399 and Cys-412 are joined by a disulfide bond. An N-linked (GlcNAc...) asparagine glycan is attached at Asn-464. An intrachain disulfide couples Cys-467 to Cys-481.

Functionally, required for polar body extrusion during cytokinesis in embryo development. Affects cortical granule size. Shown to have roles in meiotic chromosome segregation, osmotic barrier function and polarization in conjunction with cpg-2. Binds chitin. The protein is Chondroitin proteoglycan 2 of Caenorhabditis briggsae.